A 323-amino-acid polypeptide reads, in one-letter code: MAVNMTMGRDTKWLTLEVCREFQRGTCSRSDAECKFAHPSRSCHVENGRVIACFDSLKGRCTRENCKYLHPPPHLKTQLEINGRNNLIQQKAAAAMLAQQMQFMLPGAQLQPITTFPMTHSLATSPSMAFSPYLNHMGPGMGLMPELLPSTPLLVPGSPTGLAAMSNGTSSPKHMRTDKLEVCREFQRGNCTRGESDCRYAHPLEAGMVDSSENSVIVCMDYIKGRCSRDKCKYFHPPAHLQARIKASQHQASQNTASAALSPPAGTMQLLPKRPVLEKSNGAVAGIFNPSMFHYQQALANMQLQQPAFIPTGEWCSGVVTLC.

4 C3H1-type zinc fingers span residues 13 to 41, 47 to 73, 177 to 205, and 213 to 239; these read WLTL…HPSR, NGRV…HPPP, TDKL…HPLE, and ENSV…HPPA.

Belongs to the muscleblind family. In terms of tissue distribution, expressed in fast and slow myotomal muscle, heart, liver, skin, brain and testis.

It localises to the nucleus. It is found in the cytoplasm. Involved in pre-mRNA alternative splicing regulation. Could inhibit terminal muscle differentiation, acting at approximately the time of myogenin induction. This Takifugu rubripes (Japanese pufferfish) protein is Muscleblind-like protein 3 (mbnl3).